Consider the following 76-residue polypeptide: MAFLKKSLFLVLFLGLVSLSICEEEKRENEDEEEQEDEEQSEEKRASWKVFLKNIGKAAGKAVLNSVTDMVNQGEQ.

The signal sequence occupies residues 1 to 22; the sequence is MAFLKKSLFLVLFLGLVSLSIC. Residues 23-45 constitute a propeptide that is removed on maturation; that stretch reads EEEKRENEDEEEQEDEEQSEEKR. The segment at 24 to 44 is disordered; sequence EEKRENEDEEEQEDEEQSEEK. The segment covering 30-41 has biased composition (acidic residues); the sequence is EDEEEQEDEEQS. A Glutamine amide modification is found at glutamine 73. Positions 74-76 are excised as a propeptide; it reads GEQ.

In terms of tissue distribution, expressed by the skin glands.

It localises to the secreted. It is found in the target cell membrane. Its function is as follows. Antimicrobial peptide with activity against Gram-positive and Gram-negative bacteria and fungi. Has been tested against E.coli (MIC=2.68-8 uM), S.aureus (ATCC 25923, MIC=2.68-8 uM), S.aureus (ATCC oxacillin resistant, MIC=2.68 uM), K.pneumoniae (MIC=10.71 uM) and C.albicans (MIC=10.71-32 uM). Probably acts by disturbing membrane functions with its alpha-helical amphipathic structure. May penetrate bacterial membranes, but stay at the mammalian membrane surface. Shows a very weak hemolytic activity. This Agalychnis spurrelli (Gliding leaf frog) protein is Dermaseptin-SP2.